The chain runs to 42 residues: Photosystem I reaction center subunit IX (42 aa).

A helical transmembrane segment spans residues 7–27 (YLSVAPVLSTLWFGSLAGLLI).

It belongs to the PsaJ family.

The protein localises to the plastid. The protein resides in the chloroplast thylakoid membrane. May help in the organization of the PsaE and PsaF subunits. This is Photosystem I reaction center subunit IX from Daucus carota (Wild carrot).